A 256-amino-acid polypeptide reads, in one-letter code: Pimeloyl-[acyl-carrier protein] methyl ester esterase (256 aa).

An AB hydrolase-1 domain is found at 15–242; it reads HLVLLHGWGL…AAHAPFISHP (228 aa). Residues Trp22, 82-83, and 143-147 contribute to the substrate site; these read SL and FLALQ. Residue Ser82 is the Nucleophile of the active site. Catalysis depends on residues Asp207 and His235. His235 provides a ligand contact to substrate.

The protein belongs to the AB hydrolase superfamily. Carboxylesterase BioH family. In terms of assembly, monomer.

Its subcellular location is the cytoplasm. It carries out the reaction 6-carboxyhexanoyl-[ACP] methyl ester + H2O = 6-carboxyhexanoyl-[ACP] + methanol + H(+). It functions in the pathway cofactor biosynthesis; biotin biosynthesis. In terms of biological role, the physiological role of BioH is to remove the methyl group introduced by BioC when the pimeloyl moiety is complete. It allows to synthesize pimeloyl-ACP via the fatty acid synthetic pathway through the hydrolysis of the ester bonds of pimeloyl-ACP esters. The protein is Pimeloyl-[acyl-carrier protein] methyl ester esterase of Escherichia coli O45:K1 (strain S88 / ExPEC).